The chain runs to 525 residues: Cytochrome P450 CYP72A613 (525 aa).

Residues 2–22 traverse the membrane as a helical segment; that stretch reads VFLFPTGTIIIWVLTILLAVI. Cys473 contacts heme.

The protein belongs to the cytochrome P450 family. In terms of tissue distribution, mainly expressed in leaves and seed pods and, to a lower extent, in flowers and stems.

It is found in the membrane. The protein operates within steroid metabolism; cholesterol metabolism. Functionally, involved in the biosynthesis of spiroketal steroid and saponin natural products from cholesterol such as diosgenin and analogs (e.g. furostanol and spirostanol), plant defense compounds used as main precursors for the industrial production of steroid hormones. During the 5,6-spiroketalization of cholesterol, may catalyze the 27-monohydroxylation of furostanol-type steroid to an intermediate product that undergoes a stereospecific formation of the terminal heterocycle to yield diosgenin. The sequence is that of Cytochrome P450 CYP72A613 from Trigonella foenum-graecum (Fenugreek).